A 602-amino-acid polypeptide reads, in one-letter code: Threonine--tRNA ligase (602 aa).

A catalytic region spans residues 208–499; the sequence is DHRKLGTELK…LTEHCAGEFP (292 aa). The Zn(2+) site is built by C300, H351, and H476.

Belongs to the class-II aminoacyl-tRNA synthetase family. As to quaternary structure, homodimer. It depends on Zn(2+) as a cofactor.

The protein localises to the cytoplasm. It carries out the reaction tRNA(Thr) + L-threonine + ATP = L-threonyl-tRNA(Thr) + AMP + diphosphate + H(+). Catalyzes the attachment of threonine to tRNA(Thr) in a two-step reaction: L-threonine is first activated by ATP to form Thr-AMP and then transferred to the acceptor end of tRNA(Thr). Also edits incorrectly charged L-seryl-tRNA(Thr). This is Threonine--tRNA ligase from Campylobacter jejuni subsp. jejuni serotype O:23/36 (strain 81-176).